The sequence spans 304 residues: Acetyl-coenzyme A carboxylase carboxyl transferase subunit beta (304 aa).

One can recognise a CoA carboxyltransferase N-terminal domain in the interval 23–292 (VWTKCDSCGQ…PNPEAPREGV (270 aa)). Zn(2+) contacts are provided by Cys-27, Cys-30, Cys-46, and Cys-49. The segment at 27-49 (CDSCGQVLYRAELERNLEVCPKC) adopts a C4-type zinc-finger fold. The interval 284–304 (NPEAPREGVVVPPVPDQEPEA) is disordered. Over residues 295 to 304 (PPVPDQEPEA) the composition is skewed to pro residues.

Belongs to the AccD/PCCB family. As to quaternary structure, acetyl-CoA carboxylase is a heterohexamer composed of biotin carboxyl carrier protein (AccB), biotin carboxylase (AccC) and two subunits each of ACCase subunit alpha (AccA) and ACCase subunit beta (AccD). The cofactor is Zn(2+).

It localises to the cytoplasm. It catalyses the reaction N(6)-carboxybiotinyl-L-lysyl-[protein] + acetyl-CoA = N(6)-biotinyl-L-lysyl-[protein] + malonyl-CoA. Its pathway is lipid metabolism; malonyl-CoA biosynthesis; malonyl-CoA from acetyl-CoA: step 1/1. Functionally, component of the acetyl coenzyme A carboxylase (ACC) complex. Biotin carboxylase (BC) catalyzes the carboxylation of biotin on its carrier protein (BCCP) and then the CO(2) group is transferred by the transcarboxylase to acetyl-CoA to form malonyl-CoA. The sequence is that of Acetyl-coenzyme A carboxylase carboxyl transferase subunit beta from Shigella boydii serotype 18 (strain CDC 3083-94 / BS512).